Reading from the N-terminus, the 396-residue chain is Argininosuccinate synthase (396 aa).

Position 6 to 14 (6 to 14 (AYSGGLDTS)) interacts with ATP. Residue Y83 participates in L-citrulline binding. ATP is bound at residue G113. 3 residues coordinate L-aspartate: T115, N119, and D120. N119 contacts L-citrulline. Positions 123, 171, 180, 256, and 268 each coordinate L-citrulline.

It belongs to the argininosuccinate synthase family. Type 1 subfamily. In terms of assembly, homotetramer.

The protein resides in the cytoplasm. The catalysed reaction is L-citrulline + L-aspartate + ATP = 2-(N(omega)-L-arginino)succinate + AMP + diphosphate + H(+). The protein operates within amino-acid biosynthesis; L-arginine biosynthesis; L-arginine from L-ornithine and carbamoyl phosphate: step 2/3. The chain is Argininosuccinate synthase from Hyperthermus butylicus (strain DSM 5456 / JCM 9403 / PLM1-5).